A 480-amino-acid polypeptide reads, in one-letter code: PTS system sucrose-specific EIIBC component (480 aa).

The PTS EIIB type-1 domain maps to 4-87; sequence KKSAENILQA…EKITGKEASS (84 aa). Cys-26 acts as the Phosphocysteine intermediate; for EIIB activity in catalysis. 8 helical membrane-spanning segments follow: residues 109–129, 158–178, 182–202, 264–284, 303–323, 349–369, 405–425, and 449–469; these read LSDI…LMGI, MINI…GFSA, FGGN…PELM, LLTP…FVGP, FGGA…VITG, PIAT…FFII, PFIG…FFKV, and LHYG…TYAL. The region spanning 120–480 is the PTS EIIC type-1 domain; the sequence is IVAGGLLMGI…YRKKYRNIEA (361 aa).

The protein localises to the cell membrane. The enzyme catalyses N(pros)-phospho-L-histidyl-[protein](out) + sucrose = sucrose 6(G)-phosphate(in) + L-histidyl-[protein]. Functionally, the phosphoenolpyruvate-dependent sugar phosphotransferase system (sugar PTS), a major carbohydrate active transport system, catalyzes the phosphorylation of incoming sugar substrates concomitantly with their translocation across the cell membrane. This system is involved in sucrose transport. The sequence is that of PTS system sucrose-specific EIIBC component from Staphylococcus xylosus.